We begin with the raw amino-acid sequence, 234 residues long: Sugar fermentation stimulation protein homolog (234 aa).

The protein belongs to the SfsA family.

This chain is Sugar fermentation stimulation protein homolog, found in Pectobacterium carotovorum subsp. carotovorum (strain PC1).